The following is a 274-amino-acid chain: Large ribosomal subunit protein uL2 (274 aa).

Positions 221-274 (RGTAMNPVDHPHGGGEGRNFGKHPVTPWGVQTKGKKTRSNKRTDKFIVRRRSKK) are disordered.

This sequence belongs to the universal ribosomal protein uL2 family. As to quaternary structure, part of the 50S ribosomal subunit. Forms a bridge to the 30S subunit in the 70S ribosome.

One of the primary rRNA binding proteins. Required for association of the 30S and 50S subunits to form the 70S ribosome, for tRNA binding and peptide bond formation. It has been suggested to have peptidyltransferase activity; this is somewhat controversial. Makes several contacts with the 16S rRNA in the 70S ribosome. This is Large ribosomal subunit protein uL2 from Yersinia pseudotuberculosis serotype O:1b (strain IP 31758).